Here is a 308-residue protein sequence, read N- to C-terminus: D-alanine--D-alanine ligase (308 aa).

Residues 102 to 302 (KTVAKSAGIP…FGALLSWMVE (201 aa)) enclose the ATP-grasp domain. 128–183 (PMEPPYVVKPVAEGSSFGVVIVREGQSHPPQVLGSAEWGYGERVMVERYIPGRELT) is a binding site for ATP. 3 residues coordinate Mg(2+): Asp252, Glu269, and Asn271.

Belongs to the D-alanine--D-alanine ligase family. Mg(2+) serves as cofactor. Mn(2+) is required as a cofactor.

The protein resides in the cytoplasm. The catalysed reaction is 2 D-alanine + ATP = D-alanyl-D-alanine + ADP + phosphate + H(+). It functions in the pathway cell wall biogenesis; peptidoglycan biosynthesis. Cell wall formation. This chain is D-alanine--D-alanine ligase, found in Chelativorans sp. (strain BNC1).